A 490-amino-acid chain; its full sequence is Tryptophan 5-hydroxylase 2 (490 aa).

A Phosphoserine modification is found at Ser-19. Positions 34–62 (LTLNKANSGKNDDKGNKGSSKNETATESG) are disordered. Polar residues predominate over residues 50–62 (KGSSKNETATESG). One can recognise an ACT domain in the interval 65 to 140 (AVVFSLKNEV…TIVTLNPPEN (76 aa)). Fe cation-binding residues include His-318, His-323, and Glu-363.

The protein belongs to the biopterin-dependent aromatic amino acid hydroxylase family. In terms of assembly, interacts with DNAJC12. Fe(2+) is required as a cofactor.

It carries out the reaction (6R)-L-erythro-5,6,7,8-tetrahydrobiopterin + L-tryptophan + O2 = 5-hydroxy-L-tryptophan + (4aS,6R)-4a-hydroxy-L-erythro-5,6,7,8-tetrahydrobiopterin. It functions in the pathway aromatic compound metabolism; serotonin biosynthesis; serotonin from L-tryptophan: step 1/2. The protein is Tryptophan 5-hydroxylase 2 (TPH2) of Macaca mulatta (Rhesus macaque).